We begin with the raw amino-acid sequence, 143 residues long: Large ribosomal subunit protein uL13 (143 aa).

It belongs to the universal ribosomal protein uL13 family. In terms of assembly, part of the 50S ribosomal subunit.

In terms of biological role, this protein is one of the early assembly proteins of the 50S ribosomal subunit, although it is not seen to bind rRNA by itself. It is important during the early stages of 50S assembly. This is Large ribosomal subunit protein uL13 from Caldanaerobacter subterraneus subsp. tengcongensis (strain DSM 15242 / JCM 11007 / NBRC 100824 / MB4) (Thermoanaerobacter tengcongensis).